Here is a 444-residue protein sequence, read N- to C-terminus: Exopolygalacturonase clone GBGA483 (444 aa).

Residues 1-23 (MVGSHKASGVLLVLLVVMATTIA) form the signal peptide. PbH1 repeat units lie at residues 220 to 246 (CKNITLSDIGIDAPPESLNTDGIHIGR), 247 to 268 (SNGVNLIGAKIKTGDDCVSIGD), 270 to 290 (TENLIVENVECGPGHGISIGS), 300 to 321 (VKGVTVRKCLIKNTDNGVRIKT), and 330 to 351 (ASNILFEDITMDNVSLPVLIDQ). Asn-222 carries N-linked (GlcNAc...) asparagine glycosylation. Asp-261 acts as the Proton donor in catalysis. A disulfide bond links Cys-263 and Cys-280. His-284 is a catalytic residue. The N-linked (GlcNAc...) asparagine glycan is linked to Asn-342. Disulfide bonds link Cys-391-Cys-397 and Cys-420-Cys-436.

This sequence belongs to the glycosyl hydrolase 28 family.

Its subcellular location is the secreted. The protein resides in the cell wall. The catalysed reaction is [(1-&gt;4)-alpha-D-galacturonosyl](n) + H2O = alpha-D-galacturonate + [(1-&gt;4)-alpha-D-galacturonosyl](n-1). Functionally, may function in depolymerizing pectin during pollen development, germination, and tube growth. Acts as an exo-polygalacturonase. The sequence is that of Exopolygalacturonase clone GBGA483 from Arabidopsis thaliana (Mouse-ear cress).